Consider the following 759-residue polypeptide: Arylphorin subunit A4 (759 aa).

A signal peptide spans 1–16 (MKIAIVLLAIIALVAA).

The protein belongs to the hemocyanin family. As to quaternary structure, heterohexamer. Fat body.

Its subcellular location is the secreted. It is found in the extracellular space. In terms of biological role, arylphorin is a larval storage protein (LSP) which may serve as a storage protein used primarily as a source of aromatic amino acids for protein synthesis during metamorphosis. It is a constituent of the sclerotizing system of the cuticle, and serves as a carrier for ecdysteroid hormone. The chain is Arylphorin subunit A4 from Calliphora vicina (Blue blowfly).